The primary structure comprises 116 residues: Iron-sulfur cluster assembly protein CyaY (116 aa).

Belongs to the frataxin family.

Functionally, involved in iron-sulfur (Fe-S) cluster assembly. May act as a regulator of Fe-S biogenesis. This is Iron-sulfur cluster assembly protein CyaY from Buchnera aphidicola subsp. Acyrthosiphon pisum (strain APS) (Acyrthosiphon pisum symbiotic bacterium).